Consider the following 495-residue polypeptide: Zinc finger and SCAN domain-containing protein 5B (495 aa).

Residues 1 to 40 are disordered; sequence MAANWTLSWGQGGPCNSPGSDTPRSVASPETQLGNHDRNP. The span at 17–34 shows a compositional bias: polar residues; sequence SPGSDTPRSVASPETQLG. Positions 44–126 constitute an SCAN box domain; sequence HMNFRMFSCP…DLLRNNRRPK (83 aa). Disordered regions lie at residues 150–183 and 227–347; these read APAS…RREQ and ENRE…PDGQ. The span at 161-173 shows a compositional bias: polar residues; sequence VSSQWASSVNQMH. The span at 250–262 shows a compositional bias: basic and acidic residues; that stretch reads RAKEGKEPQKRAS. Polar residues predominate over residues 292–310; that stretch reads NLSSPKRSKPDASSISQEE. 5 C2H2-type zinc fingers span residues 355–377, 383–405, 411–433, 439–461, and 467–489; these read FACD…RRSH, FQCD…QRVH, YMCD…KRIH, FKCK…QRTH, and YKCP…LKTH.

Its subcellular location is the nucleus. Functionally, may be involved in transcriptional regulation. The sequence is that of Zinc finger and SCAN domain-containing protein 5B (ZSCAN5B) from Homo sapiens (Human).